Here is a 427-residue protein sequence, read N- to C-terminus: Enolase (427 aa).

A (2R)-2-phosphoglycerate-binding site is contributed by glutamine 163. Glutamate 205 serves as the catalytic Proton donor. The Mg(2+) site is built by aspartate 242, glutamate 283, and aspartate 310. Lysine 335, arginine 364, serine 365, and lysine 386 together coordinate (2R)-2-phosphoglycerate. Residue lysine 335 is the Proton acceptor of the active site.

Belongs to the enolase family. It depends on Mg(2+) as a cofactor.

Its subcellular location is the cytoplasm. It is found in the secreted. The protein resides in the cell surface. It catalyses the reaction (2R)-2-phosphoglycerate = phosphoenolpyruvate + H2O. It functions in the pathway carbohydrate degradation; glycolysis; pyruvate from D-glyceraldehyde 3-phosphate: step 4/5. Functionally, catalyzes the reversible conversion of 2-phosphoglycerate (2-PG) into phosphoenolpyruvate (PEP). It is essential for the degradation of carbohydrates via glycolysis. The polypeptide is Enolase (Salinispora arenicola (strain CNS-205)).